The chain runs to 330 residues: Phosphate acyltransferase (330 aa).

Belongs to the PlsX family. In terms of assembly, homodimer. Probably interacts with PlsY.

Its subcellular location is the cytoplasm. The enzyme catalyses a fatty acyl-[ACP] + phosphate = an acyl phosphate + holo-[ACP]. The protein operates within lipid metabolism; phospholipid metabolism. Its function is as follows. Catalyzes the reversible formation of acyl-phosphate (acyl-PO(4)) from acyl-[acyl-carrier-protein] (acyl-ACP). This enzyme utilizes acyl-ACP as fatty acyl donor, but not acyl-CoA. In Streptococcus pneumoniae (strain P1031), this protein is Phosphate acyltransferase.